The chain runs to 177 residues: MPIKSRIRSIPDYPKKGIMFRDITTLIKDPVGFRLVIDHLTQHYLEAGMDFDVIVGIEARGFIIGGALSYTLGKGFVPVRKPGKLPADVVSQEYELEYGSDKIEIHTDALVEGQRVLLVDDLLATGGTALAAAALVEKVGGIVAEMAFIVNLPDVGGERKLLEKGYNVYSLTDFEGD.

Belongs to the purine/pyrimidine phosphoribosyltransferase family. As to quaternary structure, homodimer.

Its subcellular location is the cytoplasm. It catalyses the reaction AMP + diphosphate = 5-phospho-alpha-D-ribose 1-diphosphate + adenine. It functions in the pathway purine metabolism; AMP biosynthesis via salvage pathway; AMP from adenine: step 1/1. In terms of biological role, catalyzes a salvage reaction resulting in the formation of AMP, that is energically less costly than de novo synthesis. This chain is Adenine phosphoribosyltransferase, found in Chlorobium chlorochromatii (strain CaD3).